Reading from the N-terminus, the 600-residue chain is Putative DNA 3'-5' helicase Rad25 (600 aa).

A Helicase ATP-binding domain is found at 253-402 (VDRFEDASAG…DIYTLVGRPI (150 aa)). ATP is bound at residue 266–273 (GPPGSGKT). The DEAH box motif lies at 356 to 359 (DEVH). Positions 457-600 (EIEHLVDQHG…VTESDASHSP (144 aa)) constitute a Helicase C-terminal domain. Positions 569–600 (RGTEEEDHARSRMRHLSTKGVRVTESDASHSP) are disordered. The segment covering 590–600 (RVTESDASHSP) has biased composition (basic and acidic residues).

This sequence belongs to the helicase family. RAD25/XPB subfamily.

The enzyme catalyses Couples ATP hydrolysis with the unwinding of duplex DNA by translocating in the 3'-5' direction.. The catalysed reaction is ATP + H2O = ADP + phosphate + H(+). In Halobacterium salinarum (strain ATCC 700922 / JCM 11081 / NRC-1) (Halobacterium halobium), this protein is Putative DNA 3'-5' helicase Rad25.